Consider the following 292-residue polypeptide: Tetratricopeptide repeat protein 1 (292 aa).

The tract at residues 23-125 (TQEAECAGPP…STRLKEEGNE (103 aa)) is disordered. Composition is skewed to basic and acidic residues over residues 45–55 (LLRDDEAHLQE) and 75–85 (GADKVENKSNE). A phosphoserine mark is found at Ser83 and Ser90. The span at 99–125 (ELEKNMSDEEKQKRREESTRLKEEGNE) shows a compositional bias: basic and acidic residues. 3 TPR repeats span residues 116-149 (STRL…CPSC), 155-188 (SILF…NPSY), and 189-222 (IRAI…DPSI).

As to quaternary structure, interacts with the GAP domain of NF1. Interacts (via TPR repeats) with HSP90AA1 and HSPA8.

In Homo sapiens (Human), this protein is Tetratricopeptide repeat protein 1 (TTC1).